The following is a 242-amino-acid chain: 1-(5-phosphoribosyl)-5-[(5-phosphoribosylamino)methylideneamino] imidazole-4-carboxamide isomerase (242 aa).

The active-site Proton acceptor is Asp8. Asp129 serves as the catalytic Proton donor.

It belongs to the HisA/HisF family.

The protein localises to the cytoplasm. The enzyme catalyses 1-(5-phospho-beta-D-ribosyl)-5-[(5-phospho-beta-D-ribosylamino)methylideneamino]imidazole-4-carboxamide = 5-[(5-phospho-1-deoxy-D-ribulos-1-ylimino)methylamino]-1-(5-phospho-beta-D-ribosyl)imidazole-4-carboxamide. It participates in amino-acid biosynthesis; L-histidine biosynthesis; L-histidine from 5-phospho-alpha-D-ribose 1-diphosphate: step 4/9. The polypeptide is 1-(5-phosphoribosyl)-5-[(5-phosphoribosylamino)methylideneamino] imidazole-4-carboxamide isomerase (Beijerinckia indica subsp. indica (strain ATCC 9039 / DSM 1715 / NCIMB 8712)).